The chain runs to 105 residues: Cyclotide vibi-J (105 aa).

The signal sequence occupies residues 1–9; it reads AAFALPALA. A propeptide spanning residues 10–71 is cleaved from the precursor; it reads TSFEKDFITH…KSSNSINALG (62 aa). The cyclopeptide (Gly-Asn) cross-link spans 72–102; sequence GTFPCGESCVWIPCISKVIGCACKSKVCYKN. 3 cysteine pairs are disulfide-bonded: C76–C92, C80–C94, and C85–C99. Positions 103–105 are excised as a propeptide; the sequence is SLA.

In terms of processing, this is a cyclic peptide.

In terms of biological role, probably participates in a plant defense mechanism. This chain is Cyclotide vibi-J, found in Viola biflora (Yellow wood violet).